The sequence spans 438 residues: MQVTLEKKEGIHCSLLIEVPANEIDSVVSKEINRTAKTIKMDGFRPGKVPAGMVKKKYGEQIRMEVISDLIPQKYSKAIQDEKLAVAGIEVELKENKEGQPLKFVANLELFPEFEVTGFEKIEVQKPVVELTDKEVKQMIENLRKQFATFSEVYKVVEKDDKVTIDFVGKKDGEAFEGGTANDIDVIIGSGQMIPGFEDGIIGMKKGEQKTITVTFPQDYQNKDLAGAETTFDITVKKIQQAELPEVNDEFVKKFGVKGGVDTFENEIKENMQRELKFILQRKVKDQVFKGLREIAKFETPKSLIKREIDAAKQNLLKQMGGAKGFDVNQLPDNLFEANAKQKVETSLILDSIMNSQEFKAEEAEVESLLDELVQAYEEPEKTKEQIKKNDKEIANLKALVIENKLTDWVLEQAKVTEKTEDFFEVIKENMQAQQAGF.

Residues 160–245 form the PPIase FKBP-type domain; sequence DDKVTIDFVG…VKKIQQAELP (86 aa).

The protein belongs to the FKBP-type PPIase family. Tig subfamily.

It is found in the cytoplasm. It catalyses the reaction [protein]-peptidylproline (omega=180) = [protein]-peptidylproline (omega=0). Functionally, involved in protein export. Acts as a chaperone by maintaining the newly synthesized protein in an open conformation. Functions as a peptidyl-prolyl cis-trans isomerase. The sequence is that of Trigger factor from Francisella tularensis subsp. holarctica (strain OSU18).